A 388-amino-acid polypeptide reads, in one-letter code: Formate-dependent phosphoribosylglycinamide formyltransferase (388 aa).

N(1)-(5-phospho-beta-D-ribosyl)glycinamide-binding positions include 15–16 (EL) and glutamate 75. ATP is bound by residues arginine 107, lysine 148, 153 to 158 (SSGKGQ), 188 to 191 (EEFL), and glutamate 196. The 191-residue stretch at 112–302 (DLAAGELALR…EFELHLRAVL (191 aa)) folds into the ATP-grasp domain. The Mg(2+) site is built by glutamate 261 and glutamate 273. N(1)-(5-phospho-beta-D-ribosyl)glycinamide-binding positions include aspartate 280, lysine 350, and 357-358 (RR).

The protein belongs to the PurK/PurT family. As to quaternary structure, homodimer.

The enzyme catalyses N(1)-(5-phospho-beta-D-ribosyl)glycinamide + formate + ATP = N(2)-formyl-N(1)-(5-phospho-beta-D-ribosyl)glycinamide + ADP + phosphate + H(+). Its pathway is purine metabolism; IMP biosynthesis via de novo pathway; N(2)-formyl-N(1)-(5-phospho-D-ribosyl)glycinamide from N(1)-(5-phospho-D-ribosyl)glycinamide (formate route): step 1/1. Functionally, involved in the de novo purine biosynthesis. Catalyzes the transfer of formate to 5-phospho-ribosyl-glycinamide (GAR), producing 5-phospho-ribosyl-N-formylglycinamide (FGAR). Formate is provided by PurU via hydrolysis of 10-formyl-tetrahydrofolate. This is Formate-dependent phosphoribosylglycinamide formyltransferase from Parasynechococcus marenigrum (strain WH8102).